Here is a 179-residue protein sequence, read N- to C-terminus: MAKLHDYYRDTVVNELKAKFNYSSVMQVPRIEKITLNMGVGEALTDKKLLDNAVADLAAISGQKPLVTKARKSVAGFKIRQGYPIGCKVTLRGERMWEFFERLITIAVPRIRDFRGLNTKSFDGRGNYSMGVREQIIFPEIDYDKVDRVRGLDITITTTAKSDEEGQALLAAFNFPFRK.

Belongs to the universal ribosomal protein uL5 family. Part of the 50S ribosomal subunit; part of the 5S rRNA/L5/L18/L25 subcomplex. Contacts the 5S rRNA and the P site tRNA. Forms a bridge to the 30S subunit in the 70S ribosome.

Functionally, this is one of the proteins that bind and probably mediate the attachment of the 5S RNA into the large ribosomal subunit, where it forms part of the central protuberance. In the 70S ribosome it contacts protein S13 of the 30S subunit (bridge B1b), connecting the 2 subunits; this bridge is implicated in subunit movement. Contacts the P site tRNA; the 5S rRNA and some of its associated proteins might help stabilize positioning of ribosome-bound tRNAs. In Histophilus somni (strain 129Pt) (Haemophilus somnus), this protein is Large ribosomal subunit protein uL5.